The following is a 497-amino-acid chain: tRNA-2-methylthio-N(6)-dimethylallyladenosine synthase (497 aa).

Residues 1-50 (MTGTSNIPTHGKEHKDAPALLPLPAPNPHHTHAAHPGDPSHDRPPSRGKL) are disordered. Residues 48–165 (GKLFIKTHGC…LPDMIRARRE (118 aa)) form the MTTase N-terminal domain. [4Fe-4S] cluster contacts are provided by C57, C94, C128, C202, C206, and C209. One can recognise a Radical SAM core domain in the interval 188–430 (RAEGPSAFVS…QKHINAYAAD (243 aa)). One can recognise a TRAM domain in the interval 433–496 (KRMIGTVQTV…TNSLRGRVHT (64 aa)).

Belongs to the methylthiotransferase family. MiaB subfamily. As to quaternary structure, monomer. [4Fe-4S] cluster is required as a cofactor.

The protein localises to the cytoplasm. The catalysed reaction is N(6)-dimethylallyladenosine(37) in tRNA + (sulfur carrier)-SH + AH2 + 2 S-adenosyl-L-methionine = 2-methylsulfanyl-N(6)-dimethylallyladenosine(37) in tRNA + (sulfur carrier)-H + 5'-deoxyadenosine + L-methionine + A + S-adenosyl-L-homocysteine + 2 H(+). Its function is as follows. Catalyzes the methylthiolation of N6-(dimethylallyl)adenosine (i(6)A), leading to the formation of 2-methylthio-N6-(dimethylallyl)adenosine (ms(2)i(6)A) at position 37 in tRNAs that read codons beginning with uridine. This is tRNA-2-methylthio-N(6)-dimethylallyladenosine synthase from Xylella fastidiosa (strain M12).